A 90-amino-acid chain; its full sequence is MPKARVTKNETAPVSSNPSANRTPVKINSAGTPMWYKVIMFAFMIVGLAWLIINYLVGPQIPFMADLGAWNYGIGFGLMIIGLLMTMGWR.

Residues 1-25 (MPKARVTKNETAPVSSNPSANRTPV) form a disordered region. Positions 9-22 (NETAPVSSNPSANR) are enriched in polar residues. Transmembrane regions (helical) follow at residues 38-58 (VIMFAFMIVGLAWLIINYLVG) and 67-87 (LGAWNYGIGFGLMIIGLLMTM).

Belongs to the CrgA family.

It is found in the cell membrane. Involved in cell division. This Corynebacterium glutamicum (strain ATCC 13032 / DSM 20300 / JCM 1318 / BCRC 11384 / CCUG 27702 / LMG 3730 / NBRC 12168 / NCIMB 10025 / NRRL B-2784 / 534) protein is Cell division protein CrgA.